The primary structure comprises 314 residues: tRNA pseudouridine synthase B (314 aa).

Substrate is bound at residue His43. The active-site Nucleophile is Asp48. Substrate contacts are provided by Tyr76, Tyr179, and Leu200.

It belongs to the pseudouridine synthase TruB family. Type 1 subfamily.

The enzyme catalyses uridine(55) in tRNA = pseudouridine(55) in tRNA. Its function is as follows. Responsible for synthesis of pseudouridine from uracil-55 in the psi GC loop of transfer RNAs. The polypeptide is tRNA pseudouridine synthase B (Shigella boydii serotype 4 (strain Sb227)).